The chain runs to 540 residues: Chaperonin GroEL (540 aa).

ATP contacts are provided by residues threonine 30–proline 33, lysine 51, aspartate 87–threonine 91, glycine 415, asparagine 479–alanine 481, and aspartate 495.

The protein belongs to the chaperonin (HSP60) family. In terms of assembly, forms a cylinder of 14 subunits composed of two heptameric rings stacked back-to-back. Interacts with the co-chaperonin GroES.

It is found in the cytoplasm. It catalyses the reaction ATP + H2O + a folded polypeptide = ADP + phosphate + an unfolded polypeptide.. Its function is as follows. Together with its co-chaperonin GroES, plays an essential role in assisting protein folding. The GroEL-GroES system forms a nano-cage that allows encapsulation of the non-native substrate proteins and provides a physical environment optimized to promote and accelerate protein folding. This Raoultella ornithinolytica (Klebsiella ornithinolytica) protein is Chaperonin GroEL.